A 739-amino-acid chain; its full sequence is ABC transporter G family member 20 (739 aa).

The 264-residue stretch at 88–351 folds into the ABC transporter domain; sequence LSFKDLTYSV…FSEFGHPIPE (264 aa). Residue 144–151 coordinates ATP; the sequence is GASGSGKS. One can recognise an ABC transmembrane type-2 domain in the interval 433-643; sequence TEMLVIGKRS…PYEGVLQNEF (211 aa). Transmembrane regions (helical) follow at residues 452–472, 487–507, 528–548, 563–583, 593–613, and 712–732; these read LFGI…TIFW, FFAF…PVFL, VLAH…AFAA, FLFF…FVTF, IGFT…GFFI, and LWIT…TLLI.

It belongs to the ABC transporter superfamily. ABCG family. Eye pigment precursor importer (TC 3.A.1.204) subfamily.

The protein localises to the membrane. In Arabidopsis thaliana (Mouse-ear cress), this protein is ABC transporter G family member 20 (ABCG20).